The sequence spans 142 residues: Large ribosomal subunit protein uL13 (142 aa).

This sequence belongs to the universal ribosomal protein uL13 family. As to quaternary structure, part of the 50S ribosomal subunit.

Functionally, this protein is one of the early assembly proteins of the 50S ribosomal subunit, although it is not seen to bind rRNA by itself. It is important during the early stages of 50S assembly. The polypeptide is Large ribosomal subunit protein uL13 (Shigella sonnei (strain Ss046)).